We begin with the raw amino-acid sequence, 407 residues long: Imidazolonepropionase (407 aa).

Fe(3+)-binding residues include H74 and H76. 2 residues coordinate Zn(2+): H74 and H76. 4-imidazolone-5-propanoate-binding residues include R83, Y146, and H179. Y146 is a binding site for N-formimidoyl-L-glutamate. H244 provides a ligand contact to Fe(3+). H244 is a Zn(2+) binding site. Q247 is a binding site for 4-imidazolone-5-propanoate. D319 is a binding site for Fe(3+). Position 319 (D319) interacts with Zn(2+). N-formimidoyl-L-glutamate-binding residues include N321 and G323. T324 contributes to the 4-imidazolone-5-propanoate binding site.

Belongs to the metallo-dependent hydrolases superfamily. HutI family. It depends on Zn(2+) as a cofactor. The cofactor is Fe(3+).

It localises to the cytoplasm. The enzyme catalyses 4-imidazolone-5-propanoate + H2O = N-formimidoyl-L-glutamate. Its pathway is amino-acid degradation; L-histidine degradation into L-glutamate; N-formimidoyl-L-glutamate from L-histidine: step 3/3. In terms of biological role, catalyzes the hydrolytic cleavage of the carbon-nitrogen bond in imidazolone-5-propanoate to yield N-formimidoyl-L-glutamate. It is the third step in the universal histidine degradation pathway. This Salmonella enteritidis PT4 (strain P125109) protein is Imidazolonepropionase.